A 289-amino-acid chain; its full sequence is Agroclavine dehydrogenase (289 aa).

It belongs to the fgaFS/easG family. Monomer.

The enzyme catalyses agroclavine + NADP(+) = didehydroagroclavine + NADPH + H(+). The protein operates within alkaloid biosynthesis; ergot alkaloid biosynthesis. In terms of biological role, agroclavine dehydrogenase; part of the gene cluster that mediates the biosynthesis of fungal ergot alkaloid ergovaline, the predominant ergopeptine product in E.festucae var. lolii. DmaW catalyzes the first step of ergot alkaloid biosynthesis by condensing dimethylallyl diphosphate (DMAP) and tryptophan to form 4-dimethylallyl-L-tryptophan. The second step is catalyzed by the methyltransferase easF that methylates 4-dimethylallyl-L-tryptophan in the presence of S-adenosyl-L-methionine, resulting in the formation of 4-dimethylallyl-L-abrine. The catalase easC and the FAD-dependent oxidoreductase easE then transform 4-dimethylallyl-L-abrine to chanoclavine-I which is further oxidized by easD in the presence of NAD(+), resulting in the formation of chanoclavine-I aldehyde. Agroclavine dehydrogenase easG then mediates the conversion of chanoclavine-I aldehyde to agroclavine via a non-enzymatic adduct reaction: the substrate is an iminium intermediate that is formed spontaneously from chanoclavine-I aldehyde in the presence of glutathione. Further conversion of agroclavine to paspalic acid is a two-step process involving oxidation of agroclavine to elymoclavine and of elymoclavine to paspalic acid, the second step being performed by the elymoclavine oxidase cloA. However, cloA does not encode a functional enzyme indicating that C.fusiformis terminates its ergot alkaloid pathway at elymoclavine. The sequence is that of Agroclavine dehydrogenase from Claviceps fusiformis (Ergot fungus).